Here is an 879-residue protein sequence, read N- to C-terminus: MAGASSRVHYLSDFCCPLGGRAAGKPFVLRHEAEVFLSTGREFVYVYDQEGGLLTAVYQFPDQVWHLQLLAIRRALYVLCARTGIYCLSLDSLDRSGSQACEDKEEAAPPYPVIHVDPDACVLPDAALCAFTVLDDMLVTLAQGPTQWKMQLFERPCAGEEPLPRGQIGEVELSTCTPPGGVPEKPAAPRFLPVLCCVFPPDSRAPHGHPQGCGCFTLEEALFGLLFGVDATLLQSPVILCGLPDGQLCCVVLKALVTSGLAPGDPKVLVKILHHLEEPVIFIGALRAEPHEEEAAGELLPGQHEHSDCLVALGHQGRTLAIKASWSESGNLVPELREYCLPGPVLCAACDRDGHVYHSTPSDLCVVDLTRRDSPWNPEKPDGAIGGLPSVLCPASLNICSALALCVTARAPTGSTELLALSSKGRLITCSLDLNSEAPVPAKMAMANAGQKIKELLLDIGDVSERVSFLKKAVDQRNKAITSLNEAMNVSCALLSHPEGDRPIACTITTSWSRLELRDMLMATCTLENSSSFSLDQGWTLCIQVLTSSSALDLDGTGSAFTYTIPVDRLGPGSRREVTLPLGPSESGVLDLPVTMSCWLFYSLREVVGAALAPSDPLEAPYLEQFPLSLPKQEGVCLPLCKRTVDMLQCLRFAGAATHPAQAPCMPGPACEPVETFLKTCQAPGSEPTGAASLRAKYLPPSTASIRVSAGLLRAALEDSHSGFHLCSATLRWLLAENAAVDVVRAQTLSSIQGIAPDGTDVNLTVHEVAVTDLSPAGPIQAVEIQVESSSLANMCRAHHAIIRRIQTMVTEQAALGSSPPDLRMQYLQQIHANHQELLREVQALRDQLCTEDELSSCSTAQKLLHIYKQLRNPSLVLL.

In terms of assembly, belongs to the multisubunit FA complex composed of FANCA, FANCB, FANCC, FANCE, FANCF, FANCG, FANCL/PHF9, FANCM, FAAP24 and FAAP100. Forms a subcomplex with FANCB and FANCL.

Its subcellular location is the nucleus. In terms of biological role, plays a role in Fanconi anemia-associated DNA damage response network. Regulates FANCD2 monoubiquitination and the stability of the FA core complex. Induces chromosomal instability as well as hypersensitivity to DNA cross-linking agents, when repressed. This chain is Fanconi anemia core complex-associated protein 100, found in Mus musculus (Mouse).